The sequence spans 347 residues: S-adenosylmethionine:tRNA ribosyltransferase-isomerase (347 aa).

Belongs to the QueA family. Monomer.

The protein resides in the cytoplasm. The catalysed reaction is 7-aminomethyl-7-carbaguanosine(34) in tRNA + S-adenosyl-L-methionine = epoxyqueuosine(34) in tRNA + adenine + L-methionine + 2 H(+). Its pathway is tRNA modification; tRNA-queuosine biosynthesis. Its function is as follows. Transfers and isomerizes the ribose moiety from AdoMet to the 7-aminomethyl group of 7-deazaguanine (preQ1-tRNA) to give epoxyqueuosine (oQ-tRNA). The chain is S-adenosylmethionine:tRNA ribosyltransferase-isomerase from Pseudomonas paraeruginosa (strain DSM 24068 / PA7) (Pseudomonas aeruginosa (strain PA7)).